Reading from the N-terminus, the 351-residue chain is Phosphoribosylformylglycinamidine cyclo-ligase (351 aa).

It belongs to the AIR synthase family.

The protein resides in the cytoplasm. It carries out the reaction 2-formamido-N(1)-(5-O-phospho-beta-D-ribosyl)acetamidine + ATP = 5-amino-1-(5-phospho-beta-D-ribosyl)imidazole + ADP + phosphate + H(+). It participates in purine metabolism; IMP biosynthesis via de novo pathway; 5-amino-1-(5-phospho-D-ribosyl)imidazole from N(2)-formyl-N(1)-(5-phospho-D-ribosyl)glycinamide: step 2/2. The chain is Phosphoribosylformylglycinamidine cyclo-ligase from Xylella fastidiosa (strain 9a5c).